Here is a 129-residue protein sequence, read N- to C-terminus: uncharacterized protein (129 aa).

The protein belongs to the asfivirus C129R family.

It localises to the virion. In terms of biological role, plays a role in the inhibition of type I interferon signaling pathway. Mechanistically, specifically interacts with 2',3'-cGAMP and cleaves it via its phosphodiesterase activity. In turn, prevents 2',3'-cGAMP interaction with host ER-resident STING1 leading to inhibition of downstream signaling pathway and type I interferon production. This is an uncharacterized protein from Ornithodoros (relapsing fever ticks).